The following is a 352-amino-acid chain: UDP-3-O-acylglucosamine N-acyltransferase (352 aa).

Catalysis depends on H257, which acts as the Proton acceptor.

Belongs to the transferase hexapeptide repeat family. LpxD subfamily. In terms of assembly, homotrimer.

The enzyme catalyses a UDP-3-O-[(3R)-3-hydroxyacyl]-alpha-D-glucosamine + a (3R)-hydroxyacyl-[ACP] = a UDP-2-N,3-O-bis[(3R)-3-hydroxyacyl]-alpha-D-glucosamine + holo-[ACP] + H(+). It participates in bacterial outer membrane biogenesis; LPS lipid A biosynthesis. In terms of biological role, catalyzes the N-acylation of UDP-3-O-acylglucosamine using 3-hydroxyacyl-ACP as the acyl donor. Is involved in the biosynthesis of lipid A, a phosphorylated glycolipid that anchors the lipopolysaccharide to the outer membrane of the cell. The chain is UDP-3-O-acylglucosamine N-acyltransferase from Methylobacterium nodulans (strain LMG 21967 / CNCM I-2342 / ORS 2060).